A 205-amino-acid chain; its full sequence is Guanylate kinase (205 aa).

Positions 7–185 constitute a Guanylate kinase-like domain; that stretch reads GNIFIISAAS…AEEDLRHIVN (179 aa). 14-21 is an ATP binding site; the sequence is AASGTGKT.

This sequence belongs to the guanylate kinase family.

It is found in the cytoplasm. The enzyme catalyses GMP + ATP = GDP + ADP. Essential for recycling GMP and indirectly, cGMP. This chain is Guanylate kinase (gmk), found in Neisseria meningitidis serogroup B (strain ATCC BAA-335 / MC58).